Consider the following 99-residue polypeptide: uncharacterized protein (99 aa).

This sequence belongs to the ycf15 family.

It localises to the plastid. The protein resides in the chloroplast. This is an uncharacterized protein from Saccharum hybrid (Sugarcane).